Reading from the N-terminus, the 449-residue chain is Tubulin alpha-1C chain (449 aa).

An MREC motif motif is present at residues 1 to 4 (MREC). Gln-11 lines the GTP pocket. Lys-40 carries the post-translational modification N6-acetyllysine. Residues Glu-71, Ser-140, Gly-144, Thr-145, Thr-179, Asn-206, and Asn-228 each contribute to the GTP site. Position 71 (Glu-71) interacts with Mg(2+). Glu-254 is a catalytic residue. Tyr-282 bears the 3'-nitrotyrosine mark. The residue at position 432 (Tyr-432) is a Phosphotyrosine. Residue Ser-439 is modified to Phosphoserine. At Tyr-449 the chain carries 3'-nitrotyrosine.

This sequence belongs to the tubulin family. In terms of assembly, dimer of alpha and beta chains. A typical microtubule is a hollow water-filled tube with an outer diameter of 25 nm and an inner diameter of 15 nM. Alpha-beta heterodimers associate head-to-tail to form protofilaments running lengthwise along the microtubule wall with the beta-tubulin subunit facing the microtubule plus end conferring a structural polarity. Microtubules usually have 13 protofilaments but different protofilament numbers can be found in some organisms and specialized cells. Requires Mg(2+) as cofactor. Some glutamate residues at the C-terminus are polyglycylated, resulting in polyglycine chains on the gamma-carboxyl group. Glycylation is mainly limited to tubulin incorporated into axonemes (cilia and flagella) whereas glutamylation is prevalent in neuronal cells, centrioles, axonemes, and the mitotic spindle. Both modifications can coexist on the same protein on adjacent residues, and lowering polyglycylation levels increases polyglutamylation, and reciprocally. Cilia and flagella glycylation is required for their stability and maintenance. Flagella glycylation controls sperm motility. In terms of processing, some glutamate residues at the C-terminus are polyglutamylated, resulting in polyglutamate chains on the gamma-carboxyl group. Polyglutamylation plays a key role in microtubule severing by spastin (SPAST). SPAST preferentially recognizes and acts on microtubules decorated with short polyglutamate tails: severing activity by SPAST increases as the number of glutamates per tubulin rises from one to eight, but decreases beyond this glutamylation threshold. Glutamylation is also involved in cilia motility. Post-translationally, acetylation of alpha chains at Lys-40 is located inside the microtubule lumen. This modification has been correlated with increased microtubule stability, intracellular transport and ciliary assembly. Methylation of alpha chains at Lys-40 is found in mitotic microtubules and is required for normal mitosis and cytokinesis contributing to genomic stability. In terms of processing, nitration of Tyr-449 is irreversible and interferes with normal dynein intracellular distribution. Post-translationally, undergoes a tyrosination/detyrosination cycle, the cyclic removal and re-addition of a C-terminal tyrosine residue by the enzymes tubulin tyrosine carboxypeptidase (MATCAP1, VASH1 or VASH2) and tubulin tyrosine ligase (TTL), respectively. Tyrosination promotes microtubule interaction with CAP-Gly domain-containing proteins such as CLIP1, CLIP2 and DCTN1. Tyrosination regulates the initiation of dynein-dynactin motility via interaction with DCTN1, which brings the dynein-dynactin complex into contact with microtubules. In neurons, tyrosinated tubulins mediate the initiation of retrograde vesicle transport. In terms of processing, detyrosination is involved in metaphase plate congression by guiding chromosomes during mitosis: detyrosination promotes interaction with CENPE, promoting pole-proximal transport of chromosomes toward the equator. Detyrosination increases microtubules-dependent mechanotransduction in dystrophic cardiac and skeletal muscle. In cardiomyocytes, detyrosinated microtubules are required to resist to contractile compression during contraction: detyrosination promotes association with desmin (DES) at force-generating sarcomeres, leading to buckled microtubules and mechanical resistance to contraction. As to expression, minor alpha-tubulin expressed in all tissues.

It is found in the cytoplasm. It localises to the cytoskeleton. It catalyses the reaction GTP + H2O = GDP + phosphate + H(+). Functionally, tubulin is the major constituent of microtubules, a cylinder consisting of laterally associated linear protofilaments composed of alpha- and beta-tubulin heterodimers. Microtubules grow by the addition of GTP-tubulin dimers to the microtubule end, where a stabilizing cap forms. Below the cap, tubulin dimers are in GDP-bound state, owing to GTPase activity of alpha-tubulin. The chain is Tubulin alpha-1C chain (Tuba1c) from Mus musculus (Mouse).